We begin with the raw amino-acid sequence, 92 residues long: PqqA binding protein (92 aa).

The protein belongs to the PqqD family. In terms of assembly, monomer. Interacts with PqqE.

Its pathway is cofactor biosynthesis; pyrroloquinoline quinone biosynthesis. Functions as a PqqA binding protein and presents PqqA to PqqE, in the pyrroloquinoline quinone (PQQ) biosynthetic pathway. The polypeptide is PqqA binding protein (Xanthomonas euvesicatoria pv. vesicatoria (strain 85-10) (Xanthomonas campestris pv. vesicatoria)).